A 396-amino-acid chain; its full sequence is 3-amino-4-hydroxybenzoic acid synthase (396 aa).

The tract at residues 1-29 (MSSSPSPSPSSSSSSSASSSASSSPSSSS) is disordered.

Belongs to the archaeal-type DHQ synthase family. GriH subfamily. As to quaternary structure, monomer. It depends on Mn(2+) as a cofactor.

The enzyme catalyses 2-amino-4,5-dihydroxy-6-oxo-7-(phosphooxy)heptanoate = 3-amino-4-hydroxybenzoate + phosphate + 2 H2O + H(+). In terms of biological role, catalyzes the cyclization of 2-amino-4,5-dihydroxy-6-one-heptanoic acid-7-phosphate to yield 3-amino-4-hydroxybenzoic acid (3,4-AHBA). The sequence is that of 3-amino-4-hydroxybenzoic acid synthase (griH) from Streptomyces griseus subsp. griseus (strain JCM 4626 / CBS 651.72 / NBRC 13350 / KCC S-0626 / ISP 5235).